Consider the following 269-residue polypeptide: Shikimate dehydrogenase (NADP(+)) (269 aa).

Shikimate contacts are provided by residues 15–17 (SLS) and threonine 62. Residue lysine 66 is the Proton acceptor of the active site. Positions 86 and 99 each coordinate shikimate. NADP(+) is bound by residues 123 to 127 (GAGGA), 146 to 151 (NRTTAK), and leucine 213. Tyrosine 215 provides a ligand contact to shikimate. Position 236 (glycine 236) interacts with NADP(+).

Belongs to the shikimate dehydrogenase family. Homodimer.

It carries out the reaction shikimate + NADP(+) = 3-dehydroshikimate + NADPH + H(+). It functions in the pathway metabolic intermediate biosynthesis; chorismate biosynthesis; chorismate from D-erythrose 4-phosphate and phosphoenolpyruvate: step 4/7. Involved in the biosynthesis of the chorismate, which leads to the biosynthesis of aromatic amino acids. Catalyzes the reversible NADPH linked reduction of 3-dehydroshikimate (DHSA) to yield shikimate (SA). This is Shikimate dehydrogenase (NADP(+)) from Methanocella arvoryzae (strain DSM 22066 / NBRC 105507 / MRE50).